The following is a 101-amino-acid chain: Small ribosomal subunit protein bS18c (101 aa).

Basic residues predominate over residues 1-19 (MDKSKRLFRKSKRSFRRRL). Residues 1–23 (MDKSKRLFRKSKRSFRRRLPPIG) form a disordered region.

The protein belongs to the bacterial ribosomal protein bS18 family. Part of the 30S ribosomal subunit.

The protein localises to the plastid. Its subcellular location is the chloroplast. The protein is Small ribosomal subunit protein bS18c of Liriodendron tulipifera (Tuliptree).